The chain runs to 162 residues: MNIPFRVGQGFDVHALVEGRPLIIGGVTIAHTHGLLGHSDADVLLHAVTDALLGGAGLGDIGRHFPDTDQAYRGADSRVLLRAAFDKVRAAGWAPVNVDATIHAQAPKIGPHAAAMVANIAADLALDAGAVNIKAKTNEGLGYLGRKEGIAANVVVLLARAG.

2 residues coordinate a divalent metal cation: Asp12 and His14. 4-CDP-2-C-methyl-D-erythritol 2-phosphate contacts are provided by residues Asp12 to His14 and His38 to Ser39. His46 contributes to the a divalent metal cation binding site. 4-CDP-2-C-methyl-D-erythritol 2-phosphate-binding positions include Asp60–Gly62, Phe65–Asp69, and Arg146.

The protein belongs to the IspF family. As to quaternary structure, homotrimer. It depends on a divalent metal cation as a cofactor.

It carries out the reaction 4-CDP-2-C-methyl-D-erythritol 2-phosphate = 2-C-methyl-D-erythritol 2,4-cyclic diphosphate + CMP. Its pathway is isoprenoid biosynthesis; isopentenyl diphosphate biosynthesis via DXP pathway; isopentenyl diphosphate from 1-deoxy-D-xylulose 5-phosphate: step 4/6. Its function is as follows. Involved in the biosynthesis of isopentenyl diphosphate (IPP) and dimethylallyl diphosphate (DMAPP), two major building blocks of isoprenoid compounds. Catalyzes the conversion of 4-diphosphocytidyl-2-C-methyl-D-erythritol 2-phosphate (CDP-ME2P) to 2-C-methyl-D-erythritol 2,4-cyclodiphosphate (ME-CPP) with a corresponding release of cytidine 5-monophosphate (CMP). The polypeptide is 2-C-methyl-D-erythritol 2,4-cyclodiphosphate synthase (Bordetella bronchiseptica (strain ATCC BAA-588 / NCTC 13252 / RB50) (Alcaligenes bronchisepticus)).